A 179-amino-acid polypeptide reads, in one-letter code: Large ribosomal subunit protein uL6 (179 aa).

Belongs to the universal ribosomal protein uL6 family. In terms of assembly, part of the 50S ribosomal subunit.

Functionally, this protein binds to the 23S rRNA, and is important in its secondary structure. It is located near the subunit interface in the base of the L7/L12 stalk, and near the tRNA binding site of the peptidyltransferase center. This chain is Large ribosomal subunit protein uL6, found in Chlorobium phaeobacteroides (strain BS1).